A 309-amino-acid polypeptide reads, in one-letter code: Ribokinase (309 aa).

Substrate contacts are provided by residues 14–16 (NAD), 42–46 (GKGAN), and Glu-143. Residues Asn-187 and 223–228 (TLGSRG) contribute to the ATP site. Asp-249 and Ile-251 together coordinate K(+). Residues 254 to 255 (GD) and His-279 contribute to the ATP site. A substrate-binding site is contributed by Asp-255. Residue Asp-255 is the Proton acceptor of the active site. Residues Ala-285, Arg-288, Gly-290, and Ser-294 each coordinate K(+).

Belongs to the carbohydrate kinase PfkB family. Ribokinase subfamily. As to quaternary structure, homodimer. Mg(2+) is required as a cofactor.

The protein localises to the cytoplasm. It catalyses the reaction D-ribose + ATP = D-ribose 5-phosphate + ADP + H(+). It functions in the pathway carbohydrate metabolism; D-ribose degradation; D-ribose 5-phosphate from beta-D-ribopyranose: step 2/2. Activated by a monovalent cation that binds near, but not in, the active site. The most likely occupant of the site in vivo is potassium. Ion binding induces a conformational change that may alter substrate affinity. In terms of biological role, catalyzes the phosphorylation of ribose at O-5 in a reaction requiring ATP and magnesium. The resulting D-ribose-5-phosphate can then be used either for sythesis of nucleotides, histidine, and tryptophan, or as a component of the pentose phosphate pathway. This Escherichia coli O157:H7 protein is Ribokinase.